Consider the following 546-residue polypeptide: Probable protein kinase UbiB (546 aa).

Residues D124–F502 form the Protein kinase domain. Residues L130–V138 and K153 each bind ATP. The active-site Proton acceptor is D288. Transmembrane regions (helical) follow at residues Y501–P521 and E522–W542.

The protein belongs to the ABC1 family. UbiB subfamily.

It is found in the cell inner membrane. It participates in cofactor biosynthesis; ubiquinone biosynthesis [regulation]. Its function is as follows. Is probably a protein kinase regulator of UbiI activity which is involved in aerobic coenzyme Q (ubiquinone) biosynthesis. In Escherichia coli O45:K1 (strain S88 / ExPEC), this protein is Probable protein kinase UbiB.